The chain runs to 271 residues: MPELPEVETTRRGIAPYLVGKRICRVTVRTAKLRLPLQPDLDSILSGRIISAVERRGKYLLVRFTAGTLILHLGMTGNLRLVQADTPPGRHDHLDLVLNSGLCLRLTDPRRFSTIVWTHDDPLRHTLLAKHGPEPLTGDFSGDYLYTKSRGRRITVKQFIMDSRVLAGVGNIYACEALFRAGIHPETPAGALSTTHCLRLADTIKEVLTDAIASGGSTLGDFLVSEGKPGYFPMSFSVYGRNDAPCPGCGAPIRRSRQGGRSTYFCDRCQH.

Pro-2 (schiff-base intermediate with DNA) is an active-site residue. The Proton donor role is filled by Glu-3. Residue Lys-58 is the Proton donor; for beta-elimination activity of the active site. Residues His-91, Arg-110, and Arg-152 each coordinate DNA. The FPG-type zinc-finger motif lies at 237 to 271; it reads SVYGRNDAPCPGCGAPIRRSRQGGRSTYFCDRCQH. Arg-261 (proton donor; for delta-elimination activity) is an active-site residue.

Belongs to the FPG family. In terms of assembly, monomer. Zn(2+) is required as a cofactor.

The enzyme catalyses Hydrolysis of DNA containing ring-opened 7-methylguanine residues, releasing 2,6-diamino-4-hydroxy-5-(N-methyl)formamidopyrimidine.. It carries out the reaction 2'-deoxyribonucleotide-(2'-deoxyribose 5'-phosphate)-2'-deoxyribonucleotide-DNA = a 3'-end 2'-deoxyribonucleotide-(2,3-dehydro-2,3-deoxyribose 5'-phosphate)-DNA + a 5'-end 5'-phospho-2'-deoxyribonucleoside-DNA + H(+). Involved in base excision repair of DNA damaged by oxidation or by mutagenic agents. Acts as a DNA glycosylase that recognizes and removes damaged bases. Has a preference for oxidized purines, such as 7,8-dihydro-8-oxoguanine (8-oxoG). Has AP (apurinic/apyrimidinic) lyase activity and introduces nicks in the DNA strand. Cleaves the DNA backbone by beta-delta elimination to generate a single-strand break at the site of the removed base with both 3'- and 5'-phosphates. The chain is Formamidopyrimidine-DNA glycosylase from Geotalea uraniireducens (strain Rf4) (Geobacter uraniireducens).